Reading from the N-terminus, the 491-residue chain is Serralysin (491 aa).

A propeptide spanning residues 1 to 16 (MGSFLLKKAVGLSNIS) is cleaved from the precursor. Histidine 186 is a binding site for Zn(2+). Glutamate 187 is an active-site residue. Zn(2+)-binding residues include histidine 190, histidine 196, and tyrosine 226. Arginine 263, glycine 265, aspartate 295, glycine 297, glycine 298, aspartate 300, threonine 337, glutamate 339, glycine 344, glycine 346, aspartate 348, asparagine 353, alanine 355, asparagine 357, glycine 361, glycine 362, glycine 364, aspartate 366, glycine 370, glycine 373, aspartate 384, glycine 388, glycine 389, glycine 391, aspartate 402, aspartate 409, and aspartate 419 together coordinate Ca(2+). 3 Hemolysin-type calcium-binding repeats span residues 342–359 (IGGF…DNTL), 360–377 (IGGE…NNTI), and 378–395 (YGGR…SNTF).

The protein belongs to the peptidase M10B family. Requires Ca(2+) as cofactor. Zn(2+) serves as cofactor.

The protein resides in the secreted. It carries out the reaction Preferential cleavage of bonds with hydrophobic residues in P1'.. With respect to regulation, ca(2+) increases protease activity. Functionally, one of the virulence factors produced during swarmer cell differentiation of the bacteria, which seems to be associated with pathogenesis. The protease activity is limited to IgA1, IgA2, as well as IgG degradation. The sequence is that of Serralysin (zapA) from Proteus mirabilis.